We begin with the raw amino-acid sequence, 204 residues long: Holliday junction branch migration complex subunit RuvA (204 aa).

A domain I region spans residues 1–64; it reads MIGRLRGILL…EDAQLLYGFN (64 aa). A domain II region spans residues 65-143; sequence TVKERALFRE…GWSAGDLFTP (79 aa). A flexible linker region spans residues 144-155; that stretch reads FTDAAPVDSGST. Positions 156 to 204 are domain III; the sequence is SSNSAEEEAVSALLALGYKPVQASKVVSQIAKPDMTSEQLIREALKSMV.

The protein belongs to the RuvA family. As to quaternary structure, homotetramer. Forms an RuvA(8)-RuvB(12)-Holliday junction (HJ) complex. HJ DNA is sandwiched between 2 RuvA tetramers; dsDNA enters through RuvA and exits via RuvB. An RuvB hexamer assembles on each DNA strand where it exits the tetramer. Each RuvB hexamer is contacted by two RuvA subunits (via domain III) on 2 adjacent RuvB subunits; this complex drives branch migration. In the full resolvosome a probable DNA-RuvA(4)-RuvB(12)-RuvC(2) complex forms which resolves the HJ.

It is found in the cytoplasm. Functionally, the RuvA-RuvB-RuvC complex processes Holliday junction (HJ) DNA during genetic recombination and DNA repair, while the RuvA-RuvB complex plays an important role in the rescue of blocked DNA replication forks via replication fork reversal (RFR). RuvA specifically binds to HJ cruciform DNA, conferring on it an open structure. The RuvB hexamer acts as an ATP-dependent pump, pulling dsDNA into and through the RuvAB complex. HJ branch migration allows RuvC to scan DNA until it finds its consensus sequence, where it cleaves and resolves the cruciform DNA. This Vibrio vulnificus (strain CMCP6) protein is Holliday junction branch migration complex subunit RuvA.